The primary structure comprises 198 residues: Protein GrpE (198 aa).

A compositionally biased stretch (basic and acidic residues) spans Met-1 to Glu-21. Residues Met-1–Asn-56 form a disordered region. Positions Gly-22 to Ala-34 are enriched in low complexity. The span at Gly-44–Asn-56 shows a compositional bias: basic and acidic residues.

This sequence belongs to the GrpE family. In terms of assembly, homodimer.

It localises to the cytoplasm. Functionally, participates actively in the response to hyperosmotic and heat shock by preventing the aggregation of stress-denatured proteins, in association with DnaK and GrpE. It is the nucleotide exchange factor for DnaK and may function as a thermosensor. Unfolded proteins bind initially to DnaJ; upon interaction with the DnaJ-bound protein, DnaK hydrolyzes its bound ATP, resulting in the formation of a stable complex. GrpE releases ADP from DnaK; ATP binding to DnaK triggers the release of the substrate protein, thus completing the reaction cycle. Several rounds of ATP-dependent interactions between DnaJ, DnaK and GrpE are required for fully efficient folding. The polypeptide is Protein GrpE (Chlorobium luteolum (strain DSM 273 / BCRC 81028 / 2530) (Pelodictyon luteolum)).